The chain runs to 137 residues: FAD synthase (137 aa).

ATP-binding positions include 5–6, 10–13, and Asp-88; these read TF and HPGH.

This sequence belongs to the archaeal FAD synthase family. Homodimer. A divalent metal cation serves as cofactor.

The catalysed reaction is FMN + ATP + H(+) = FAD + diphosphate. Its pathway is cofactor biosynthesis; FAD biosynthesis; FAD from FMN: step 1/1. In terms of biological role, catalyzes the transfer of the AMP portion of ATP to flavin mononucleotide (FMN) to produce flavin adenine dinucleotide (FAD) coenzyme. The chain is FAD synthase from Archaeoglobus fulgidus (strain ATCC 49558 / DSM 4304 / JCM 9628 / NBRC 100126 / VC-16).